The chain runs to 122 residues: Large ribosomal subunit protein uL14 (122 aa).

The protein belongs to the universal ribosomal protein uL14 family. Part of the 50S ribosomal subunit. Forms a cluster with proteins L3 and L19. In the 70S ribosome, L14 and L19 interact and together make contacts with the 16S rRNA in bridges B5 and B8.

Functionally, binds to 23S rRNA. Forms part of two intersubunit bridges in the 70S ribosome. The chain is Large ribosomal subunit protein uL14 from Acidiphilium cryptum (strain JF-5).